We begin with the raw amino-acid sequence, 926 residues long: DNA mismatch repair protein MutS (926 aa).

Residues 1–67 are disordered; it reads MAASPNPLQG…NPNQINDLDQ (67 aa). 2 stretches are compositionally biased toward polar residues: residues 18-44 and 57-67; these read QSTT…QLKS and KNPNQINDLDQ. 726-733 lines the ATP pocket; sequence GPNASGKS.

It belongs to the DNA mismatch repair MutS family.

Its function is as follows. This protein is involved in the repair of mismatches in DNA. It is possible that it carries out the mismatch recognition step. This protein has a weak ATPase activity. The polypeptide is DNA mismatch repair protein MutS (Prochlorococcus marinus (strain NATL1A)).